Here is an 869-residue protein sequence, read N- to C-terminus: Phenylalanine--tRNA ligase beta subunit (869 aa).

The tRNA-binding domain maps to Ser-41–Glu-162. The B5 domain maps to Pro-443–Ile-519. 4 residues coordinate Mg(2+): Asp-497, Asp-503, Glu-506, and Glu-507. Residues Ser-776–Arg-868 form the FDX-ACB domain.

Belongs to the phenylalanyl-tRNA synthetase beta subunit family. Type 1 subfamily. As to quaternary structure, tetramer of two alpha and two beta subunits. It depends on Mg(2+) as a cofactor.

Its subcellular location is the cytoplasm. It carries out the reaction tRNA(Phe) + L-phenylalanine + ATP = L-phenylalanyl-tRNA(Phe) + AMP + diphosphate + H(+). The sequence is that of Phenylalanine--tRNA ligase beta subunit from Bifidobacterium longum (strain NCC 2705).